A 353-amino-acid polypeptide reads, in one-letter code: S-adenosylmethionine:tRNA ribosyltransferase-isomerase (353 aa).

Belongs to the QueA family. As to quaternary structure, monomer.

The protein localises to the cytoplasm. The enzyme catalyses 7-aminomethyl-7-carbaguanosine(34) in tRNA + S-adenosyl-L-methionine = epoxyqueuosine(34) in tRNA + adenine + L-methionine + 2 H(+). Its pathway is tRNA modification; tRNA-queuosine biosynthesis. Its function is as follows. Transfers and isomerizes the ribose moiety from AdoMet to the 7-aminomethyl group of 7-deazaguanine (preQ1-tRNA) to give epoxyqueuosine (oQ-tRNA). The sequence is that of S-adenosylmethionine:tRNA ribosyltransferase-isomerase from Cupriavidus metallidurans (strain ATCC 43123 / DSM 2839 / NBRC 102507 / CH34) (Ralstonia metallidurans).